We begin with the raw amino-acid sequence, 284 residues long: Origin of replication complex subunit 6 (284 aa).

The protein belongs to the ORC6 family. As to quaternary structure, component of the origin recognition complex (ORC) composed of at least ORC1 (ORC1A or ORC1B), ORC2, ORC3, ORC4, ORC5 and ORC6. ORC is regulated in a cell-cycle and development dependent manner. It is sequentially assembled at the exit from anaphase of mitosis and disassembled as cells enter S phase. Interacts directly with ORC2, ORC3, ORC4 and ORC5. Follow a cell-cycle regulation with a peak at the G1/S-phase. Mostly expressed in siliques, flowers, flower buds and mature leaves, and, to a lower exent, in roots, leaves and stems.

Its subcellular location is the nucleus. Its function is as follows. Component of the origin recognition complex (ORC) that binds origins of replication. DNA-binding is ATP-dependent. The specific DNA sequences that define origins of replication have not been identified yet. ORC is required to assemble the pre-replication complex necessary to initiate DNA replication. The protein is Origin of replication complex subunit 6 of Arabidopsis thaliana (Mouse-ear cress).